Reading from the N-terminus, the 122-residue chain is Ribonuclease P protein component (122 aa).

The protein belongs to the RnpA family. In terms of assembly, consists of a catalytic RNA component (M1 or rnpB) and a protein subunit.

The catalysed reaction is Endonucleolytic cleavage of RNA, removing 5'-extranucleotides from tRNA precursor.. RNaseP catalyzes the removal of the 5'-leader sequence from pre-tRNA to produce the mature 5'-terminus. It can also cleave other RNA substrates such as 4.5S RNA. The protein component plays an auxiliary but essential role in vivo by binding to the 5'-leader sequence and broadening the substrate specificity of the ribozyme. The polypeptide is Ribonuclease P protein component (Roseiflexus sp. (strain RS-1)).